A 155-amino-acid chain; its full sequence is MSRRGTAEEKTAKSDPIYRNRLVNMLVNRILKHGKKSLAYQILYRAVKKIQQKTETNPLSVLRQAIRGVTPDIAVKARRVGGSTHQVPIEIGSTQGKALAIRWLLGASRKRPGRNMAFKLSSELVDAAKGSGDAIRKKEETHRMAEANRAFAHFR.

It belongs to the universal ribosomal protein uS7 family. Part of the 30S ribosomal subunit.

The protein localises to the plastid. It is found in the chloroplast. In terms of biological role, one of the primary rRNA binding proteins, it binds directly to 16S rRNA where it nucleates assembly of the head domain of the 30S subunit. The chain is Small ribosomal subunit protein uS7c (rps7) from Yucca glauca (Soapweed yucca).